Here is a 1007-residue protein sequence, read N- to C-terminus: MSRRSTTTSTNFGLSWSLVDVISSSTAVFKVPMNGGCDLWIGCARWLRDMKVLTTDKNGTMLEFASVLRDGILLCRLANTLVPNGIDQKKIMRTNQPSPFLCCNNINYFAMFCKTYFNLEDADLFTAEDLYYMNGFQKVLKTLSFLSHTKESLSRGVDPFPDTDNNQEGTSNGSEFEDDVEIYQSLHDNIENVDPNRTIYGPITSADPEEQQSEQLYDRIVTNRKPSMNENDLQNTPTLKRNRCIRELYDTEKNYVAQALVTIIKTFYEPLKGIIPTSDYNIIFGNIEEINVLHTALLADLEYPVKVALGLSDATPPRPISLNECVPQTIGEVFIKYRDQFLAYGKYCSNLPDSRKLSNELLKTNEFISRNINELTAQGNCKFGMNDLLCVPFQRLTKYPLLLKELQKKTDLASPDRKSLEEAVEVMEDVCNYINEESRDTNAIKVIDEIEQSITDLSMPLNVKLHDYGRVNLDGEVKMAESTLTQAGKPKQRYIFLFDKVIVVCKAANKVMAAKTTGASARTNTFTYKNAYVMSELTIDKNASLDVKSGGTITRRTQYVIIMTRDRNENNEITQLTFYFKNEATRNNWMTALLLSKSNVSPTDYLRDTNHKVAFHSFRVDVKNPATCDVCDKLMKGLQYQGYKCESCNMSMHKECLGLKKCEAVRKSTHETRSSQSFNCNRPRFHIHEGDIVVANSNSTPSDLSYLQFAKGDRIEVIKMQGHNRFTGCLINNRNRTGLVHLDHVSQSRTTSMIGLSPIDSPAGSIAPRVVRNESTVLPNKLLSDGSSRSLSGPHGSRSSRNSSSSTINGSMDSVPRQQDYVNTEISEFLWYMGEMERAKAESTLKGTPNGTFLVRYSKNRKQTAISLSYKNDVKHMIIEQNSDGKVYLDEDYIFNSTVELVQYYRSNNLIEIFAALDTCLKNPYSQCKVFKAVHDYDAPSPNNEGKFLSFKTGDIVVLLDTVGEDRGWWKGQVNNKSGFFPLSYVKPYDPATEGSSSPVTPTSSSS.

In terms of domain architecture, Calponin-homology (CH) spans 37 to 151 (CDLWIGCARW…TLSFLSHTKE (115 aa)). An AC region spans residues 151–239 (ESLSRGVDPF…ENDLQNTPTL (89 aa)). Positions 153–176 (LSRGVDPFPDTDNNQEGTSNGSEF) are disordered. Positions 163 to 174 (TDNNQEGTSNGS) are enriched in polar residues. Phosphotyrosine occurs at positions 183, 200, and 217. A DH domain is found at 240-437 (KRNRCIRELY…EDVCNYINEE (198 aa)). The region spanning 470–598 (RVNLDGEVKM…WMTALLLSKS (129 aa)) is the PH domain. The Phorbol-ester/DAG-type zinc-finger motif lies at 610–664 (NHKVAFHSFRVDVKNPATCDVCDKLMKGLQYQGYKCESCNMSMHKECLGLKKCEA). The region spanning 688-750 (HEGDIVVANS…HLDHVSQSRT (63 aa)) is the SH3 1 domain. Positions 778–817 (LPNKLLSDGSSRSLSGPHGSRSSRNSSSSTINGSMDSVPR) are disordered. Residues 782–814 (LLSDGSSRSLSGPHGSRSSRNSSSSTINGSMDS) are compositionally biased toward low complexity. Positions 831–925 (WYMGEMERAK…ALDTCLKNPY (95 aa)) constitute an SH2 domain. The SH3 2 domain maps to 926 to 991 (SQCKVFKAVH…PLSYVKPYDP (66 aa)).

GEF activity is regulated by phosphorylation on tyrosine residues. Strong expression in the pharynx, proximal gonad, spermatheca, intestine and rectal epithelia.

Acts as a guanine nucleotide exchange factor (GEF) for Rho GTPase. Has a critical roles in the generation of rhythmic behaviors: feeding, defecation and ovulation by dynamically regulating the concentration of intracellular calcium. Plays a role in male tail tip morphogenesis. This is Protein vav-1 from Caenorhabditis elegans.